Reading from the N-terminus, the 148-residue chain is Aspartate carbamoyltransferase regulatory chain (148 aa).

Cysteine 106, cysteine 111, cysteine 134, and cysteine 137 together coordinate Zn(2+).

The protein belongs to the PyrI family. Contains catalytic and regulatory chains. It depends on Zn(2+) as a cofactor.

In terms of biological role, involved in allosteric regulation of aspartate carbamoyltransferase. This is Aspartate carbamoyltransferase regulatory chain from Methanococcus maripaludis (strain C6 / ATCC BAA-1332).